We begin with the raw amino-acid sequence, 374 residues long: tRNA-specific 2-thiouridylase MnmA (374 aa).

ATP-binding positions include 12-19 (GMSGGVDS) and methionine 38. Residues 98 to 100 (NPD) are interaction with target base in tRNA. Cysteine 103 serves as the catalytic Nucleophile. An intrachain disulfide couples cysteine 103 to cysteine 200. Residue glycine 127 participates in ATP binding. An interaction with tRNA region spans residues 150–152 (KDQ). Cysteine 200 (cysteine persulfide intermediate) is an active-site residue. The segment at 311 to 312 (RY) is interaction with tRNA.

The protein belongs to the MnmA/TRMU family.

The protein localises to the cytoplasm. It carries out the reaction S-sulfanyl-L-cysteinyl-[protein] + uridine(34) in tRNA + AH2 + ATP = 2-thiouridine(34) in tRNA + L-cysteinyl-[protein] + A + AMP + diphosphate + H(+). Functionally, catalyzes the 2-thiolation of uridine at the wobble position (U34) of tRNA, leading to the formation of s(2)U34. This is tRNA-specific 2-thiouridylase MnmA from Lactiplantibacillus plantarum (strain ATCC BAA-793 / NCIMB 8826 / WCFS1) (Lactobacillus plantarum).